The following is a 158-amino-acid chain: 6,7-dimethyl-8-ribityllumazine synthase (158 aa).

Residues Phe23, 61 to 63 (SFE), and 85 to 87 (AVI) each bind 5-amino-6-(D-ribitylamino)uracil. A (2S)-2-hydroxy-3-oxobutyl phosphate-binding site is contributed by 90–91 (ET). Catalysis depends on His93, which acts as the Proton donor. Position 118 (Phe118) interacts with 5-amino-6-(D-ribitylamino)uracil. Arg132 is a binding site for (2S)-2-hydroxy-3-oxobutyl phosphate.

It belongs to the DMRL synthase family.

It catalyses the reaction (2S)-2-hydroxy-3-oxobutyl phosphate + 5-amino-6-(D-ribitylamino)uracil = 6,7-dimethyl-8-(1-D-ribityl)lumazine + phosphate + 2 H2O + H(+). The protein operates within cofactor biosynthesis; riboflavin biosynthesis; riboflavin from 2-hydroxy-3-oxobutyl phosphate and 5-amino-6-(D-ribitylamino)uracil: step 1/2. Catalyzes the formation of 6,7-dimethyl-8-ribityllumazine by condensation of 5-amino-6-(D-ribitylamino)uracil with 3,4-dihydroxy-2-butanone 4-phosphate. This is the penultimate step in the biosynthesis of riboflavin. In Prochlorococcus marinus (strain MIT 9301), this protein is 6,7-dimethyl-8-ribityllumazine synthase.